Here is a 1066-residue protein sequence, read N- to C-terminus: Carbamoyl phosphate synthase large chain (1066 aa).

Residues 1–401 (MPKNNNIKKV…ALMKAVRSLE (401 aa)) are carboxyphosphate synthetic domain. Residues Arg129, Arg169, Gly175, Gly176, Arg208, Ile210, Glu215, Gly241, Val242, His243, Gln284, and Glu298 each contribute to the ATP site. Residues 133 to 327 (KNTMEKIGEP…IAKVAAKIAL (195 aa)) form the ATP-grasp 1 domain. Residues Gln284, Glu298, and Asn300 each coordinate Mg(2+). 3 residues coordinate Mn(2+): Gln284, Glu298, and Asn300. The segment at 402–547 (QNIYSMNYGD…YSCFDSENEV (146 aa)) is oligomerization domain. A carbamoyl phosphate synthetic domain region spans residues 548-931 (DATKTKKKVL…ALYKAFLGAG (384 aa)). Residues 673-863 (DEILEKCCIP…IVSLASKAVL (191 aa)) enclose the ATP-grasp 2 domain. ATP is bound by residues Arg709, Lys748, Leu750, Glu754, Gly779, Ile780, His781, Ser782, Gln822, and Glu834. The Mg(2+) site is built by Gln822, Glu834, and Asn836. Mn(2+) is bound by residues Gln822, Glu834, and Asn836. The MGS-like domain occupies 932–1066 (INLPKHKKMI…ELSLIDIARI (135 aa)). An allosteric domain region spans residues 932–1066 (INLPKHKKMI…ELSLIDIARI (135 aa)).

This sequence belongs to the CarB family. Composed of two chains; the small (or glutamine) chain promotes the hydrolysis of glutamine to ammonia, which is used by the large (or ammonia) chain to synthesize carbamoyl phosphate. Tetramer of heterodimers (alpha,beta)4. Mg(2+) is required as a cofactor. Requires Mn(2+) as cofactor.

It catalyses the reaction hydrogencarbonate + L-glutamine + 2 ATP + H2O = carbamoyl phosphate + L-glutamate + 2 ADP + phosphate + 2 H(+). The enzyme catalyses hydrogencarbonate + NH4(+) + 2 ATP = carbamoyl phosphate + 2 ADP + phosphate + 2 H(+). Its pathway is amino-acid biosynthesis; L-arginine biosynthesis; carbamoyl phosphate from bicarbonate: step 1/1. It participates in pyrimidine metabolism; UMP biosynthesis via de novo pathway; (S)-dihydroorotate from bicarbonate: step 1/3. Functionally, large subunit of the glutamine-dependent carbamoyl phosphate synthetase (CPSase). CPSase catalyzes the formation of carbamoyl phosphate from the ammonia moiety of glutamine, carbonate, and phosphate donated by ATP, constituting the first step of 2 biosynthetic pathways, one leading to arginine and/or urea and the other to pyrimidine nucleotides. The large subunit (synthetase) binds the substrates ammonia (free or transferred from glutamine from the small subunit), hydrogencarbonate and ATP and carries out an ATP-coupled ligase reaction, activating hydrogencarbonate by forming carboxy phosphate which reacts with ammonia to form carbamoyl phosphate. The protein is Carbamoyl phosphate synthase large chain of Lachnoclostridium phytofermentans (strain ATCC 700394 / DSM 18823 / ISDg) (Clostridium phytofermentans).